The primary structure comprises 503 residues: Maturase K (503 aa).

This sequence belongs to the intron maturase 2 family. MatK subfamily.

The protein resides in the plastid. It localises to the chloroplast. In terms of biological role, usually encoded in the trnK tRNA gene intron. Probably assists in splicing its own and other chloroplast group II introns. The chain is Maturase K from Syzygium anisatum (Aniseed myrtle).